Consider the following 275-residue polypeptide: MTLQQQIIKALGAKPQINAEEEIRRSVDFLKSYLQTYPFIKSLVLGISGGQDSTLAGKLCQMAINELRQETGNESLQFIAVRLPYGVQADEQDCQDAIAFIQPDRVLTVNIKGAVLASEQALREAGIELSDFVRGNEKARERMKAQYSIAGMTSGVVVGTDHAAEAITGFFTKYGDGGTDINPLYRLNKRQGKQLLAALGCPEHLYKKAPTADLEDDRPSLPDEVALGVTYDNIDDYLEGKNVPEQVARTIENWYLKTEHKRRPPITVFDDFWKK.

An ATP-binding site is contributed by 46-53 (GISGGQDS). A Mg(2+)-binding site is contributed by Asp-52. Arg-140 lines the deamido-NAD(+) pocket. Thr-160 is an ATP binding site. Glu-165 is a binding site for Mg(2+). Lys-173 and Asp-180 together coordinate deamido-NAD(+). Residues Lys-189 and Thr-211 each coordinate ATP. 260–261 (HK) provides a ligand contact to deamido-NAD(+).

This sequence belongs to the NAD synthetase family. In terms of assembly, homodimer.

It carries out the reaction deamido-NAD(+) + NH4(+) + ATP = AMP + diphosphate + NAD(+) + H(+). It participates in cofactor biosynthesis; NAD(+) biosynthesis; NAD(+) from deamido-NAD(+) (ammonia route): step 1/1. Its function is as follows. Catalyzes the ATP-dependent amidation of deamido-NAD to form NAD. Uses ammonia as a nitrogen source. This Escherichia coli O7:K1 (strain IAI39 / ExPEC) protein is NH(3)-dependent NAD(+) synthetase.